The following is a 131-amino-acid chain: Glycine cleavage system H protein (131 aa).

Residues 24 to 106 enclose the Lipoyl-binding domain; sequence TVTIGITDHA…YEDGWIIKLK (83 aa). At lysine 65 the chain carries N6-lipoyllysine.

It belongs to the GcvH family. The glycine cleavage system is composed of four proteins: P, T, L and H. (R)-lipoate serves as cofactor.

In terms of biological role, the glycine cleavage system catalyzes the degradation of glycine. The H protein shuttles the methylamine group of glycine from the P protein to the T protein. This chain is Glycine cleavage system H protein, found in Chromohalobacter salexigens (strain ATCC BAA-138 / DSM 3043 / CIP 106854 / NCIMB 13768 / 1H11).